A 394-amino-acid polypeptide reads, in one-letter code: NAD(P)H-quinone oxidoreductase subunit H (394 aa).

The protein belongs to the complex I 49 kDa subunit family. NDH-1 can be composed of about 15 different subunits; different subcomplexes with different compositions have been identified which probably have different functions.

It is found in the cellular thylakoid membrane. The enzyme catalyses a plastoquinone + NADH + (n+1) H(+)(in) = a plastoquinol + NAD(+) + n H(+)(out). The catalysed reaction is a plastoquinone + NADPH + (n+1) H(+)(in) = a plastoquinol + NADP(+) + n H(+)(out). Functionally, NDH-1 shuttles electrons from an unknown electron donor, via FMN and iron-sulfur (Fe-S) centers, to quinones in the respiratory and/or the photosynthetic chain. The immediate electron acceptor for the enzyme in this species is believed to be plastoquinone. Couples the redox reaction to proton translocation, and thus conserves the redox energy in a proton gradient. Cyanobacterial NDH-1 also plays a role in inorganic carbon-concentration. This is NAD(P)H-quinone oxidoreductase subunit H from Prochlorococcus marinus (strain MIT 9303).